Consider the following 100-residue polypeptide: Protein Tat (100 aa).

Residues 1 to 24 (MDPIDPDLEPWKHPGSQPRTVCNN) are interaction with human CREBBP. The tract at residues 1–48 (MDPIDPDLEPWKHPGSQPRTVCNNCYCKACCYHCIYCFTKKGLGISYG) is transactivation. Zn(2+) is bound by residues cysteine 22, cysteine 25, and cysteine 27. Positions 22–37 (CNNCYCKACCYHCIYC) are cysteine-rich. Lysine 28 is modified (N6-acetyllysine; by host PCAF). Positions 30, 33, 34, and 37 each coordinate Zn(2+). Positions 38-48 (FTKKGLGISYG) are core. Residues 48 to 58 (GRKKRTTRRRT) are compositionally biased toward basic residues. Residues 48–100 (GRKKRTTRRRTAPAGSKNNQDSIPKQPLSQSRGNKEGSEKSTKEVASKTEADQ) form a disordered region. The Nuclear localization signal, RNA-binding (TAR), and protein transduction signature appears at 49–57 (RKKRTTRRR). The interval 49–87 (RKKRTTRRRTAPAGSKNNQDSIPKQPLSQSRGNKEGSEK) is interaction with the host capping enzyme RNGTT. N6-acetyllysine; by host EP300 and GCN5L2 occurs at positions 50 and 51. An Asymmetric dimethylarginine; by host PRMT6 modification is found at arginine 52. A compositionally biased stretch (polar residues) spans 63–79 (SKNNQDSIPKQPLSQSR). Lysine 72 is covalently cross-linked (Glycyl lysine isopeptide (Lys-Gly) (interchain with G-Cter in ubiquitin)). The segment covering 80 to 100 (GNKEGSEKSTKEVASKTEADQ) has biased composition (basic and acidic residues).

Belongs to the lentiviruses Tat family. As to quaternary structure, interacts with host CCNT1. Associates with the P-TEFb complex composed at least of Tat, P-TEFb (CDK9 and CCNT1), TAR RNA, RNA Pol II. Recruits the HATs CREBBP, TAF1/TFIID, EP300, PCAF and GCN5L2. Interacts with host KAT5/Tip60; this interaction targets the latter to degradation. Interacts with the host deacetylase SIRT1. Interacts with host capping enzyme RNGTT; this interaction stimulates RNGTT. Binds to host KDR, and to the host integrins ITGAV/ITGB3 and ITGA5/ITGB1. Interacts with host KPNB1/importin beta-1 without previous binding to KPNA1/importin alpha-1. Interacts with EIF2AK2. Interacts with host nucleosome assembly protein NAP1L1; this interaction may be required for the transport of Tat within the nucleus, since the two proteins interact at the nuclear rim. Interacts with host C1QBP/SF2P32; this interaction involves lysine-acetylated Tat. Interacts with the host chemokine receptors CCR2, CCR3 and CXCR4. Interacts with host DPP4/CD26; this interaction may trigger an anti-proliferative effect. Interacts with host LDLR. Interacts with the host extracellular matrix metalloproteinase MMP1. Interacts with host PRMT6; this interaction mediates Tat's methylation. Interacts with, and is ubiquitinated by MDM2/Hdm2. Interacts with host PSMC3 and HTATIP2. Interacts with STAB1; this interaction may overcome SATB1-mediated repression of IL2 and IL2RA (interleukin) in T cells by binding to the same domain than HDAC1. Interacts (when acetylated) with human CDK13, thereby increasing HIV-1 mRNA splicing and promoting the production of the doubly spliced HIV-1 protein Nef. Interacts with host TBP; this interaction modulates the activity of transcriptional pre-initiation complex. Interacts with host RELA. Asymmetrical arginine methylation by host PRMT6 seems to diminish the transactivation capacity of Tat and affects the interaction with host CCNT1. Post-translationally, acetylation by EP300, CREBBP, GCN5L2/GCN5 and PCAF regulates the transactivation activity of Tat. EP300-mediated acetylation of Lys-50 promotes dissociation of Tat from the TAR RNA through the competitive binding to PCAF's bromodomain. In addition, the non-acetylated Tat's N-terminus can also interact with PCAF. PCAF-mediated acetylation of Lys-28 enhances Tat's binding to CCNT1. Lys-50 is deacetylated by SIRT1. In terms of processing, polyubiquitination by host MDM2 does not target Tat to degradation, but activates its transactivation function and fosters interaction with CCNT1 and TAR RNA. Phosphorylated by EIF2AK2 on serine and threonine residues adjacent to the basic region important for TAR RNA binding and function. Phosphorylation of Tat by EIF2AK2 is dependent on the prior activation of EIF2AK2 by dsRNA.

Its subcellular location is the host nucleus. The protein localises to the host nucleolus. It is found in the host cytoplasm. The protein resides in the secreted. In terms of biological role, transcriptional activator that increases RNA Pol II processivity, thereby increasing the level of full-length viral transcripts. Recognizes a hairpin structure at the 5'-LTR of the nascent viral mRNAs referred to as the transactivation responsive RNA element (TAR) and recruits the cyclin T1-CDK9 complex (P-TEFb complex) that will in turn hyperphosphorylate the RNA polymerase II to allow efficient elongation. The CDK9 component of P-TEFb and other Tat-activated kinases hyperphosphorylate the C-terminus of RNA Pol II that becomes stabilized and much more processive. Other factors such as HTATSF1/Tat-SF1, SUPT5H/SPT5, and HTATIP2 are also important for Tat's function. Besides its effect on RNA Pol II processivity, Tat induces chromatin remodeling of proviral genes by recruiting the histone acetyltransferases (HATs) CREBBP, EP300 and PCAF to the chromatin. This also contributes to the increase in proviral transcription rate, especially when the provirus integrates in transcriptionally silent region of the host genome. To ensure maximal activation of the LTR, Tat mediates nuclear translocation of NF-kappa-B by interacting with host RELA. Through its interaction with host TBP, Tat may also modulate transcription initiation. Tat can reactivate a latently infected cell by penetrating in it and transactivating its LTR promoter. In the cytoplasm, Tat is thought to act as a translational activator of HIV-1 mRNAs. Its function is as follows. Extracellular circulating Tat can be endocytosed by surrounding uninfected cells via the binding to several surface receptors such as CD26, CXCR4, heparan sulfate proteoglycans (HSPG) or LDLR. Neurons are rarely infected, but they internalize Tat via their LDLR. Through its interaction with nuclear HATs, Tat is potentially able to control the acetylation-dependent cellular gene expression. Modulates the expression of many cellular genes involved in cell survival, proliferation or in coding for cytokines or cytokine receptors. Tat plays a role in T-cell and neurons apoptosis. Tat induced neurotoxicity and apoptosis probably contribute to neuroAIDS. Circulating Tat also acts as a chemokine-like and/or growth factor-like molecule that binds to specific receptors on the surface of the cells, affecting many cellular pathways. In the vascular system, Tat binds to ITGAV/ITGB3 and ITGA5/ITGB1 integrins dimers at the surface of endothelial cells and competes with bFGF for heparin-binding sites, leading to an excess of soluble bFGF. In Pan (chimpanzees), this protein is Protein Tat.